The following is a 386-amino-acid chain: Putative aminotransferase YugH (386 aa).

Residue Lys234 is modified to N6-(pyridoxal phosphate)lysine.

Belongs to the class-I pyridoxal-phosphate-dependent aminotransferase family. Requires pyridoxal 5'-phosphate as cofactor.

The protein localises to the cytoplasm. The chain is Putative aminotransferase YugH (yugH) from Bacillus subtilis (strain 168).